The primary structure comprises 261 residues: Ribonuclease PH (261 aa).

Phosphate-binding positions include R87 and 125–127 (GTR).

Belongs to the RNase PH family. In terms of assembly, homohexameric ring arranged as a trimer of dimers.

It catalyses the reaction tRNA(n+1) + phosphate = tRNA(n) + a ribonucleoside 5'-diphosphate. Functionally, phosphorolytic 3'-5' exoribonuclease that plays an important role in tRNA 3'-end maturation. Removes nucleotide residues following the 3'-CCA terminus of tRNAs; can also add nucleotides to the ends of RNA molecules by using nucleoside diphosphates as substrates, but this may not be physiologically important. Probably plays a role in initiation of 16S rRNA degradation (leading to ribosome degradation) during starvation. The polypeptide is Ribonuclease PH (Thermoanaerobacter pseudethanolicus (strain ATCC 33223 / 39E) (Clostridium thermohydrosulfuricum)).